We begin with the raw amino-acid sequence, 807 residues long: Glycerol-3-phosphate acyltransferase (807 aa).

The short motif at 308–313 (CHRSHM) is the HXXXXD motif element.

This sequence belongs to the GPAT/DAPAT family.

It localises to the cell inner membrane. It catalyses the reaction sn-glycerol 3-phosphate + an acyl-CoA = a 1-acyl-sn-glycero-3-phosphate + CoA. It participates in phospholipid metabolism; CDP-diacylglycerol biosynthesis; CDP-diacylglycerol from sn-glycerol 3-phosphate: step 1/3. The sequence is that of Glycerol-3-phosphate acyltransferase from Shewanella baltica (strain OS155 / ATCC BAA-1091).